A 254-amino-acid polypeptide reads, in one-letter code: Trans-aconitate 2-methyltransferase (254 aa).

The protein belongs to the methyltransferase superfamily. Tam family.

The protein localises to the cytoplasm. The enzyme catalyses trans-aconitate + S-adenosyl-L-methionine = (E)-3-(methoxycarbonyl)pent-2-enedioate + S-adenosyl-L-homocysteine. In terms of biological role, catalyzes the S-adenosylmethionine monomethyl esterification of trans-aconitate. This Rhodococcus jostii (strain RHA1) protein is Trans-aconitate 2-methyltransferase.